An 856-amino-acid chain; its full sequence is Beta-galactosidase 3 (856 aa).

A signal peptide spans 1-31; that stretch reads MREMGTGDSASRLILWFCLGFLILGVGFVQC. The active-site Proton donor is glutamate 189. The active-site Nucleophile is the glutamate 258. The N-linked (GlcNAc...) asparagine glycan is linked to asparagine 468. The region spanning 760–846 is the SUEL-type lectin domain; the sequence is TFHRPKVHLK…KRLTVEAVCA (87 aa).

Belongs to the glycosyl hydrolase 35 family. As to expression, ubiquitous.

The protein resides in the secreted. Its subcellular location is the extracellular space. It is found in the apoplast. The catalysed reaction is Hydrolysis of terminal non-reducing beta-D-galactose residues in beta-D-galactosides.. The chain is Beta-galactosidase 3 (BGAL3) from Arabidopsis thaliana (Mouse-ear cress).